The chain runs to 876 residues: DNA topoisomerase 1 (876 aa).

In terms of domain architecture, Toprim spans 3–150 (KSLVIVESPA…RYKRVVFNEI (148 aa)). Glu-9 is a binding site for Mg(2+). Residues 37–69 (LPTAGQTATPTGKAAAASTKKASTTDKEQQKRE) are disordered. Residues 38–58 (PTAGQTATPTGKAAAASTKKA) show a composition bias toward low complexity. Residues 59-69 (STTDKEQQKRE) are compositionally biased toward basic and acidic residues. Position 119 (Asp-119) interacts with Mg(2+). In terms of domain architecture, Topo IA-type catalytic spans 166 to 582 (NMDGVNAQQA…EFFADFSRDL (417 aa)). The interaction with DNA stretch occupies residues 200–205 (SAGRVQ). Residue Tyr-327 is the O-(5'-phospho-DNA)-tyrosine intermediate of the active site. 2 consecutive C4-type zinc fingers follow at residues 668-695 (CPIC…NPNC) and 717-742 (CDKC…NDAC).

This sequence belongs to the type IA topoisomerase family. In terms of assembly, monomer. It depends on Mg(2+) as a cofactor.

It carries out the reaction ATP-independent breakage of single-stranded DNA, followed by passage and rejoining.. In terms of biological role, releases the supercoiling and torsional tension of DNA, which is introduced during the DNA replication and transcription, by transiently cleaving and rejoining one strand of the DNA duplex. Introduces a single-strand break via transesterification at a target site in duplex DNA. The scissile phosphodiester is attacked by the catalytic tyrosine of the enzyme, resulting in the formation of a DNA-(5'-phosphotyrosyl)-enzyme intermediate and the expulsion of a 3'-OH DNA strand. The free DNA strand then undergoes passage around the unbroken strand, thus removing DNA supercoils. Finally, in the religation step, the DNA 3'-OH attacks the covalent intermediate to expel the active-site tyrosine and restore the DNA phosphodiester backbone. The sequence is that of DNA topoisomerase 1 from Vibrio cholerae serotype O1 (strain ATCC 39315 / El Tor Inaba N16961).